Reading from the N-terminus, the 357-residue chain is Cytosolic Fe-S cluster assembly factor NAR1 (357 aa).

Cys-14, Cys-28, Cys-31, Cys-34, Cys-129, Cys-172, Cys-297, and Cys-301 together coordinate [4Fe-4S] cluster.

It belongs to the NARF family.

In terms of biological role, component of the cytosolic Fe/S protein assembly machinery. May play a role in the transfer of pre-assembled Fe/S clusters to target apoproteins. The sequence is that of Cytosolic Fe-S cluster assembly factor NAR1 (NAR1) from Encephalitozoon cuniculi (strain GB-M1) (Microsporidian parasite).